Here is a 393-residue protein sequence, read N- to C-terminus: NAD(P)H-quinone oxidoreductase subunit H, chloroplastic (393 aa).

Belongs to the complex I 49 kDa subunit family. As to quaternary structure, NDH is composed of at least 16 different subunits, 5 of which are encoded in the nucleus.

It is found in the plastid. It localises to the chloroplast thylakoid membrane. It carries out the reaction a plastoquinone + NADH + (n+1) H(+)(in) = a plastoquinol + NAD(+) + n H(+)(out). It catalyses the reaction a plastoquinone + NADPH + (n+1) H(+)(in) = a plastoquinol + NADP(+) + n H(+)(out). Its function is as follows. NDH shuttles electrons from NAD(P)H:plastoquinone, via FMN and iron-sulfur (Fe-S) centers, to quinones in the photosynthetic chain and possibly in a chloroplast respiratory chain. The immediate electron acceptor for the enzyme in this species is believed to be plastoquinone. Couples the redox reaction to proton translocation, and thus conserves the redox energy in a proton gradient. The sequence is that of NAD(P)H-quinone oxidoreductase subunit H, chloroplastic from Oryza nivara (Indian wild rice).